The sequence spans 493 residues: GPI alpha-1,6-mannosyltransferase 2 (493 aa).

Topologically, residues 1 to 13 (MGLLDPSQKEVLR) are cytoplasmic. The helical transmembrane segment at 14–34 (FAVNCRILTLVLQALFNLIIP) threads the bilayer. Residues 35–77 (DHHADAFCPPRLAPSGSADQLVEGLLGGLSRWDAEHFLFIAEH) are Lumenal-facing. A helical membrane pass occupies residues 78–98 (GYLYEHNFAFFPGFPLALLMG). The Cytoplasmic segment spans residues 99 to 113 (TELLRPLQGLLSQRS). A helical transmembrane segment spans residues 114–134 (CLLVSVALLNLLFSVLAAVAL). The Lumenal segment spans residues 135-136 (HD). A helical membrane pass occupies residues 137–157 (LGCLVLHCPRQALCAALLFCI). At 158–161 (SPAN) the chain is on the cytoplasmic side. A helical transmembrane segment spans residues 162-182 (VFLAAGYSEALFAFLTFSAMG). At 183-192 (QLERGRGWAS) the chain is on the lumenal side. The chain crosses the membrane as a helical span at residues 193-213 (GLLFALAAGVRSNGLVSLGFL). Over 214–234 (LHSQCRGFCSSLAVLSPWKPL) the chain is Cytoplasmic. Residues 235–255 (VKLMASVCLSVLIVSLPFALF) traverse the membrane as a helical segment. The Lumenal portion of the chain corresponds to 256–327 (QYRAYIQFCS…RYYELKQVPN (72 aa)). A helical transmembrane segment spans residues 328-348 (FLLATPVTVLVVWATWTYVTT). Over 349-378 (HPWLCLTLGLQRTKDRENPEKPHRGFLSPK) the chain is Cytoplasmic. A helical transmembrane segment spans residues 379–399 (VFVYLVHAAALLVFGGLCMHV). The Lumenal segment spans residues 400 to 469 (QVLTRFLASS…DWKRCSPVTR (70 aa)). A helical membrane pass occupies residues 470–490 (CVLVYFLTYWLLGLILHCNFL). Topologically, residues 491–493 (PWT) are cytoplasmic.

The protein belongs to the PIGV family. Post-translationally, not N-glycosylated.

The protein localises to the endoplasmic reticulum membrane. It functions in the pathway glycolipid biosynthesis; glycosylphosphatidylinositol-anchor biosynthesis. In terms of biological role, alpha-1,6-mannosyltransferase that catalyzes the transfer of the second mannose, via an alpha-1,6 bond, from a dolichol-phosphate-mannose (Dol-P-Man) to the alpha-D-Man-(1-&gt;4)-alpha-D-GlcN-(1-&gt;6)-(1-radyl,2-acyl-sn-glycero-3-phospho)-2-acyl-inositol (also termed H2) intermediate to generate an alpha-D-Man-(1-&gt;6)-alpha-D-Man-(1-&gt;4)-alpha-D-GlcN-(1-&gt;6)-(1-radyl,2-acyl-sn-glycero-3-phospho)-2-acyl-inositol (also termed H3) and participates in the seventh step of the glycosylphosphatidylinositol-anchor biosynthesis. Also transfers the second mannose on a 2-PEtn-alpha-D-Man-(1-&gt;4)-alpha-D-GlcN-(1-&gt;6)-(1-radyl,2-acyl-sn-glycero-3-phospho)-2-acyl-inositol (also termed H5). In Mus musculus (Mouse), this protein is GPI alpha-1,6-mannosyltransferase 2.